The primary structure comprises 738 residues: 1,4-alpha-glucan branching enzyme GlgB (738 aa).

Aspartate 417 acts as the Nucleophile in catalysis. Glutamate 472 acts as the Proton donor in catalysis.

It belongs to the glycosyl hydrolase 13 family. GlgB subfamily. In terms of assembly, monomer.

The enzyme catalyses Transfers a segment of a (1-&gt;4)-alpha-D-glucan chain to a primary hydroxy group in a similar glucan chain.. It functions in the pathway glycan biosynthesis; glycogen biosynthesis. Its function is as follows. Catalyzes the formation of the alpha-1,6-glucosidic linkages in glycogen by scission of a 1,4-alpha-linked oligosaccharide from growing alpha-1,4-glucan chains and the subsequent attachment of the oligosaccharide to the alpha-1,6 position. The protein is 1,4-alpha-glucan branching enzyme GlgB of Burkholderia pseudomallei (strain 1106a).